We begin with the raw amino-acid sequence, 23 residues long: SV40 early leader protein (23 aa).

The interval 1-23 (MQRPRPPRPLSYSRSSEEAFLEA) is disordered.

The protein belongs to the polyomavirus early leader protein family.

Its function is as follows. May play a role in the lytic cycle. This Macaca (macaques) protein is SV40 early leader protein.